The chain runs to 233 residues: MAKKGKKYQESAKLIDRTVEYKLDEASKLVVETAKAKFDESVELHAKLGVDSRHADQQVRGTIVLPHGTGKDQKVAVFAKGEKAEEAKAAGADFVGAEDLAEKIQKEGWLGFDVAVATPDMMGVVGRIGRILGPQGLMPNPKAGTVTMDVTSAIKEIKAGKVEYRTDKSNIIHVPVGKVSFGEEKIAENINALMQAILKAKPASSKGKYIRSLTIASTMGPGIKVNPLQFAKE.

The protein belongs to the universal ribosomal protein uL1 family. As to quaternary structure, part of the 50S ribosomal subunit.

Its function is as follows. Binds directly to 23S rRNA. The L1 stalk is quite mobile in the ribosome, and is involved in E site tRNA release. Functionally, protein L1 is also a translational repressor protein, it controls the translation of the L11 operon by binding to its mRNA. This chain is Large ribosomal subunit protein uL1, found in Finegoldia magna (strain ATCC 29328 / DSM 20472 / WAL 2508) (Peptostreptococcus magnus).